We begin with the raw amino-acid sequence, 416 residues long: Kynureninase (416 aa).

Residues T97, S98, 129–132, T172, D201, H204, and Y226 each bind pyridoxal 5'-phosphate; that span reads FPTD. The residue at position 227 (K227) is an N6-(pyridoxal phosphate)lysine. The pyridoxal 5'-phosphate site is built by W256 and T282.

It belongs to the kynureninase family. In terms of assembly, homodimer. Pyridoxal 5'-phosphate serves as cofactor.

The enzyme catalyses L-kynurenine + H2O = anthranilate + L-alanine + H(+). The catalysed reaction is 3-hydroxy-L-kynurenine + H2O = 3-hydroxyanthranilate + L-alanine + H(+). The protein operates within amino-acid degradation; L-kynurenine degradation; L-alanine and anthranilate from L-kynurenine: step 1/1. It functions in the pathway cofactor biosynthesis; NAD(+) biosynthesis; quinolinate from L-kynurenine: step 2/3. In terms of biological role, catalyzes the cleavage of L-kynurenine (L-Kyn) and L-3-hydroxykynurenine (L-3OHKyn) into anthranilic acid (AA) and 3-hydroxyanthranilic acid (3-OHAA), respectively. The chain is Kynureninase from Pseudomonas fluorescens.